Reading from the N-terminus, the 197-residue chain is dITP/XTP pyrophosphatase (197 aa).

Position 11–16 (11–16) interacts with substrate; that stretch reads SHNAGK. 2 residues coordinate Mg(2+): Glu-42 and Asp-71. The active-site Proton acceptor is Asp-71. Substrate-binding positions include Ser-72, 155-158, Lys-178, and 183-184; these read FGYD and HR.

This sequence belongs to the HAM1 NTPase family. In terms of assembly, homodimer. The cofactor is Mg(2+).

It catalyses the reaction XTP + H2O = XMP + diphosphate + H(+). The enzyme catalyses dITP + H2O = dIMP + diphosphate + H(+). It carries out the reaction ITP + H2O = IMP + diphosphate + H(+). Pyrophosphatase that catalyzes the hydrolysis of nucleoside triphosphates to their monophosphate derivatives, with a high preference for the non-canonical purine nucleotides XTP (xanthosine triphosphate), dITP (deoxyinosine triphosphate) and ITP. Seems to function as a house-cleaning enzyme that removes non-canonical purine nucleotides from the nucleotide pool, thus preventing their incorporation into DNA/RNA and avoiding chromosomal lesions. The sequence is that of dITP/XTP pyrophosphatase from Pseudomonas aeruginosa (strain ATCC 15692 / DSM 22644 / CIP 104116 / JCM 14847 / LMG 12228 / 1C / PRS 101 / PAO1).